The sequence spans 153 residues: Probable inactive ribonuclease-like protein 13 (153 aa).

A signal peptide spans M1 to G22.

It belongs to the pancreatic ribonuclease family.

The protein localises to the secreted. In terms of biological role, does not exhibit any ribonuclease activity. This chain is Probable inactive ribonuclease-like protein 13 (Rnase13), found in Rattus norvegicus (Rat).